The sequence spans 906 residues: Ectonucleotide pyrophosphatase/phosphodiesterase family member 1 (906 aa).

The tract at residues 1–25 (MERDGEQAGQGPRHGPAGNGRELES) is disordered. The Cytoplasmic segment spans residues 1–58 (MERDGEQAGQGPRHGPAGNGRELESPAAASLLAPMDLGEEPLEKAERARTAKDPNTYK). The residue at position 25 (S25) is a Phosphoserine. Residues 27-34 (AAASLLAP) carry the Di-leucine motif motif. Residues 59–79 (VLSLVLSVCVLTTILGCIFGL) form a helical; Signal-anchor for type II membrane protein membrane-spanning segment. At 80-906 (KPSCAKEVKS…THLPIFSQED (827 aa)) the chain is on the extracellular side. SMB domains lie at 86 to 126 (EVKS…VEPT) and 127 to 170 (HIWT…QEKK). 10 cysteine pairs are disulfide-bonded: C90-C104, C94-C122, C102-C115, C108-C114, C131-C148, C136-C166, C146-C159, C152-C158, C177-C223, and C185-C397. The N-linked (GlcNAc...) asparagine glycan is linked to N161. The segment at 173 to 573 (VEEACETIDA…APNNESHGSL (401 aa)) is phosphodiesterase. 3 residues coordinate AMP: D200, T238, and N259. Zn(2+) contacts are provided by D200 and T238. Residue T238 is the AMP-threonine intermediate of the active site. The CMP site is built by T238 and N259. Residues T238 and N259 each coordinate dTMP. The GMP site is built by T238 and N259. T238 is modified (phosphothreonine). N-linked (GlcNAc...) asparagine glycosylation is present at N267. 3 residues coordinate GMP: L272, K277, and Y322. Positions 277 and 322 each coordinate AMP. Residues K277 and Y322 each contribute to the CMP site. Residue Y322 participates in dTMP binding. N323 carries N-linked (GlcNAc...) asparagine glycosylation. D358 provides a ligand contact to AMP. The Zn(2+) site is built by D358, H362, D405, and H406. D358 is a binding site for CMP. A dTMP-binding site is contributed by D358. Residue D358 coordinates GMP. Position 362 (H362) interacts with 2',3'-cGAMP. H406 contributes to the AMP binding site. H406 provides a ligand contact to CMP. Position 406 (H406) interacts with dTMP. H406 lines the GMP pocket. 6 disulfide bridges follow: C413/C512, C462/C849, C596/C653, C607/C707, C609/C692, and C819/C829. N-linked (GlcNAc...) asparagine glycosylation occurs at N459. A 2',3'-cGAMP-binding site is contributed by S514. Position 517 (H517) interacts with AMP. H517 provides a ligand contact to Zn(2+). Residue H517 participates in CMP binding. H517 serves as a coordination point for dTMP. H517 contacts GMP. Residues N567 and N624 are each glycosylated (N-linked (GlcNAc...) asparagine). Residues 579-628 (KPIYTPSHPKEESFLSQCPIKSVSSDLGCTCDPSIVPIMDFEKQFNLTTD) form a linker region. Residues 635 to 906 (SMTVPNGRPR…THLPIFSQED (272 aa)) form a nuclease-like domain region. Positions 781, 783, 785, 787, and 789 each coordinate Ca(2+).

Belongs to the nucleotide pyrophosphatase/phosphodiesterase family. Ectonucleotide pyrophosphatase/phosphodiesterase family member 1: Homodimer. Ectonucleotide pyrophosphatase/phosphodiesterase family member 1: Interacts with INSR; leading to inhibit INSR autophosphorylation and subsequent activation of INSR kinase activity. Ectonucleotide pyrophosphatase/phosphodiesterase family member 1, secreted form: Monomeric. Requires Zn(2+) as cofactor. Post-translationally, the secreted form is produced through cleavage at Lys-85 by intracellular processing.

The protein localises to the cell membrane. It is found in the basolateral cell membrane. Its subcellular location is the secreted. The catalysed reaction is Hydrolytically removes 5'-nucleotides successively from the 3'-hydroxy termini of 3'-hydroxy-terminated oligonucleotides.. It carries out the reaction a ribonucleoside 5'-triphosphate + H2O = a ribonucleoside 5'-phosphate + diphosphate + H(+). The enzyme catalyses ATP + H2O = AMP + diphosphate + H(+). It catalyses the reaction UTP + H2O = UMP + diphosphate + H(+). The catalysed reaction is GTP + H2O = GMP + diphosphate + H(+). It carries out the reaction CTP + H2O = CMP + diphosphate + H(+). The enzyme catalyses 2',3'-cGAMP + 2 H2O = GMP + AMP + 2 H(+). It catalyses the reaction P(1),P(4)-bis(5'-adenosyl) tetraphosphate + H2O = AMP + ATP + 2 H(+). The catalysed reaction is 3',5'-cyclic AMP + H2O = AMP + H(+). With respect to regulation, at low concentrations of ATP, a phosphorylated intermediate is formed which inhibits further hydrolysis. In terms of biological role, nucleotide pyrophosphatase that generates diphosphate (PPi) and functions in bone mineralization and soft tissue calcification by regulating pyrophosphate levels. PPi inhibits bone mineralization and soft tissue calcification by binding to nascent hydroxyapatite crystals, thereby preventing further growth of these crystals. Preferentially hydrolyzes ATP, but can also hydrolyze other nucleoside 5' triphosphates such as GTP, CTP and UTP to their corresponding monophosphates with release of pyrophosphate, as well as diadenosine polyphosphates, and also 3',5'-cAMP to AMP. May also be involved in the regulation of the availability of nucleotide sugars in the endoplasmic reticulum and Golgi, and the regulation of purinergic signaling. Inhibits ectopic joint calcification and maintains articular chondrocytes by repressing hedgehog signaling; it is however unclear whether hedgehog inhibition is direct or indirect. Appears to modulate insulin sensitivity. Also involved in melanogenesis. Also able to hydrolyze 2',3'-cGAMP (cyclic GMP-AMP), a second messenger that activates TMEM173/STING and triggers type-I interferon production. 2',3'-cGAMP degradation takes place in the lumen or extracellular space, and not in the cytosol where it is produced; the role of 2',3'-cGAMP hydrolysis is therefore unclear. Not able to hydrolyze the 2',3'-cGAMP linkage isomer 3'-3'-cGAMP. In Rattus norvegicus (Rat), this protein is Ectonucleotide pyrophosphatase/phosphodiesterase family member 1.